Here is a 519-residue protein sequence, read N- to C-terminus: Dolichol kinase (519 aa).

Residues 1-47 (MVAIIPHASFTTIKLTQKTEGSQMPTEEICKINMRTRKFDVGGNSRD) lie on the Cytoplasmic side of the membrane. The chain crosses the membrane as a helical span at residues 48-68 (FECFYSNFVQTVILLGTFFYC). At 69-88 (VERLQPWSIVTADISYKQIF) the chain is on the lumenal side. A helical transmembrane segment spans residues 89–109 (VNVFVVCLIMVGLIFTKYWQH). Residues 110–118 (GYKSLPKFD) lie on the Cytoplasmic side of the membrane. The helical transmembrane segment at 119 to 139 (TIYSLYLPFMVSLLFDTSSTV) threads the bilayer. The Lumenal segment spans residues 140–151 (INTILILSVLNS). The chain crosses the membrane as a helical span at residues 152 to 172 (YRWRTQLVVIILQLCLIFFNF). Over 173–181 (EAGDRLKNI) the chain is Cytoplasmic. The chain crosses the membrane as a helical span at residues 182–203 (ISIVINSLLSLILKYIGQLKSL). Residues 204–223 (DNIDSNLFSILLTNILYVSE) lie on the Lumenal side of the membrane. A helical membrane pass occupies residues 224 to 244 (AGTVHFRILKGIILALTTIIS). The Cytoplasmic portion of the chain corresponds to 245–253 (INYVLKKVM). Residues 254–274 (HFKPFMLSISFAIGLPLFANT) form a helical membrane-spanning segment. The Lumenal segment spans residues 275 to 294 (FIHLEDGENPLLWLVKYILE). Residues 295–315 (STIRQKILFAWSSILILSIPS) traverse the membrane as a helical segment. Topologically, residues 316-326 (ILIEKDSLSLN) are cytoplasmic. Residues 327–347 (TSRKLWHFIIFLLIIPSFQMD) traverse the membrane as a helical segment. Residues 348 to 349 (SN) lie on the Lumenal side of the membrane. A helical membrane pass occupies residues 350–370 (FVKIALSGTIPVFLSIEYIRF). Residues 371–394 (QNLPPLGSAIELQLRRFADDRDHS) lie on the Cytoplasmic side of the membrane. A helical transmembrane segment spans residues 395–415 (GPLIISYLYLLFGISTPLLMN). The Lumenal portion of the chain corresponds to 416 to 417 (NS). The helical transmembrane segment at 418–438 (PMGLIGLGIGDSLASIIGKRY) threads the bilayer. Residues 439–449 (GRIRWKGTQKT) lie on the Cytoplasmic side of the membrane. The chain crosses the membrane as a helical span at residues 450-470 (LEGTLAFIVTSFIVCLVLLRF). The Lumenal segment spans residues 471–472 (DK). Residues 473 to 493 (AAIFNHLTTLQLLTLCTLSGV) form a helical membrane-spanning segment. Residues 494–519 (LEGNSVLNDNILIPAFMMICEKLITL) are Cytoplasmic-facing.

Belongs to the polyprenol kinase family.

The protein resides in the endoplasmic reticulum membrane. It carries out the reaction a di-trans,poly-cis-dolichol + CTP = a di-trans,poly-cis-dolichyl phosphate + CDP + H(+). The protein operates within protein modification; protein glycosylation. Its function is as follows. Catalyzes CTP-mediated phosphorylation of dolichol, the terminal step in de novo dolichyl monophosphate (Dol-P) biosynthesis. Dol-P is a lipid carrier essential for the synthesis of N-linked and O-linked oligosaccharides and for GPI anchors. This is Dolichol kinase (SEC59) from Saccharomyces cerevisiae (strain ATCC 204508 / S288c) (Baker's yeast).